The chain runs to 454 residues: Ribosomal protein uS12 methylthiotransferase RimO (454 aa).

Residues 19–129 form the MTTase N-terminal domain; sequence AKVGFVSLGC…VLAQVHEHVA (111 aa). The [4Fe-4S] cluster site is built by C28, C64, C93, C161, C165, and C168. The Radical SAM core domain maps to 147–384; that stretch reads LTPKHYAYLK…MAVQAKISSD (238 aa). Residues 387–453 form the TRAM domain; the sequence is QVRIGQEYLI…EHDVWGVRVE (67 aa).

Belongs to the methylthiotransferase family. RimO subfamily. Requires [4Fe-4S] cluster as cofactor.

It localises to the cytoplasm. The catalysed reaction is L-aspartate(89)-[ribosomal protein uS12]-hydrogen + (sulfur carrier)-SH + AH2 + 2 S-adenosyl-L-methionine = 3-methylsulfanyl-L-aspartate(89)-[ribosomal protein uS12]-hydrogen + (sulfur carrier)-H + 5'-deoxyadenosine + L-methionine + A + S-adenosyl-L-homocysteine + 2 H(+). Functionally, catalyzes the methylthiolation of an aspartic acid residue of ribosomal protein uS12. This Colwellia psychrerythraea (strain 34H / ATCC BAA-681) (Vibrio psychroerythus) protein is Ribosomal protein uS12 methylthiotransferase RimO.